The primary structure comprises 165 residues: 3-isopropylmalate dehydratase small subunit (165 aa).

It belongs to the LeuD family. LeuD type 2 subfamily. Heterodimer of LeuC and LeuD.

It catalyses the reaction (2R,3S)-3-isopropylmalate = (2S)-2-isopropylmalate. Its pathway is amino-acid biosynthesis; L-leucine biosynthesis; L-leucine from 3-methyl-2-oxobutanoate: step 2/4. Catalyzes the isomerization between 2-isopropylmalate and 3-isopropylmalate, via the formation of 2-isopropylmaleate. The protein is 3-isopropylmalate dehydratase small subunit of Hydrogenobaculum sp. (strain Y04AAS1).